A 557-amino-acid chain; its full sequence is Anthrax toxin receptor-like (557 aa).

Residues 1 to 25 (MRSHGRWGPCFLLFLLLLPPPLFRA) form the signal peptide. Residues 26–345 (GSLRYHGPGW…KSNVSVTSST (320 aa)) are Extracellular-facing. A VWFA domain is found at 74–244 (DLYFILDKSG…KAMRDTVDAL (171 aa)). The a divalent metal cation site is built by S82, S84, and T148. The helical transmembrane segment at 346–366 (CGIFSNWLYFLLPLLLLPLLL) threads the bilayer. Topologically, residues 367 to 557 (CCLWRLCRKK…PTSKAPNTQD (191 aa)) are cytoplasmic. Disordered regions lie at residues 380–411 (EPPP…LPPP) and 497–557 (ESPS…NTQD). A compositionally biased stretch (basic and acidic residues) spans 386 to 395 (KPEKEPEQEK). Positions 396-411 (PPPPPPPSPPPPLPPP) are enriched in pro residues. Positions 534 to 557 (GTLQNPLCPSLPRSPTSKAPNTQD) are enriched in polar residues.

It belongs to the ATR family.

It is found in the membrane. The polypeptide is Anthrax toxin receptor-like (ANTXRL) (Macaca fascicularis (Crab-eating macaque)).